The sequence spans 600 residues: Sulfite reductase [NADPH] flavoprotein alpha-component (600 aa).

The Flavodoxin-like domain maps to 63–201 (ITLISASQTG…VADQWRKQLT (139 aa)). FMN-binding positions include 69-74 (SQTGNA), 116-119 (STQG), and 152-161 (LGDTSYERFC). The FAD-binding FR-type domain occupies 235–449 (QAPLTAALAT…IEHNDNFRLP (215 aa)). Residues Thr-323, His-357, 387–390 (RLYS), 405–407 (TVG), Tyr-411, and 420–423 (GGAS) contribute to the FAD site. NADP(+)-binding positions include 520 to 521 (SR), 526 to 530 (KIYVQ), and Asp-562. Tyr-600 serves as a coordination point for FAD.

This sequence belongs to the NADPH-dependent sulphite reductase flavoprotein subunit CysJ family. The protein in the N-terminal section; belongs to the flavodoxin family. It in the C-terminal section; belongs to the flavoprotein pyridine nucleotide cytochrome reductase family. In terms of assembly, alpha(8)-beta(8). The alpha component is a flavoprotein, the beta component is a hemoprotein. FAD is required as a cofactor. FMN serves as cofactor.

The enzyme catalyses hydrogen sulfide + 3 NADP(+) + 3 H2O = sulfite + 3 NADPH + 4 H(+). Its pathway is sulfur metabolism; hydrogen sulfide biosynthesis; hydrogen sulfide from sulfite (NADPH route): step 1/1. Its function is as follows. Component of the sulfite reductase complex that catalyzes the 6-electron reduction of sulfite to sulfide. This is one of several activities required for the biosynthesis of L-cysteine from sulfate. The flavoprotein component catalyzes the electron flow from NADPH -&gt; FAD -&gt; FMN to the hemoprotein component. The polypeptide is Sulfite reductase [NADPH] flavoprotein alpha-component (Photorhabdus laumondii subsp. laumondii (strain DSM 15139 / CIP 105565 / TT01) (Photorhabdus luminescens subsp. laumondii)).